We begin with the raw amino-acid sequence, 461 residues long: Bifunctional protein GlmU (461 aa).

The pyrophosphorylase stretch occupies residues 1–229; the sequence is MLKKEINVVI…CKEILGVNNK (229 aa). UDP-N-acetyl-alpha-D-glucosamine is bound by residues 11–14, K25, Q76, 81–82, 103–105, G140, E154, and N227; these read LAAG, GT, and YGD. Residue D105 participates in Mg(2+) binding. Residue N227 participates in Mg(2+) binding. The linker stretch occupies residues 230–250; that stretch reads LQLSILEKIFRKKQVNDLLLS. Positions 251 to 461 are N-acetyltransferase; it reads GVTLKDPNHF…PQKIIKKTDQ (211 aa). The UDP-N-acetyl-alpha-D-glucosamine site is built by R333 and K351. H363 functions as the Proton acceptor in the catalytic mechanism. Residues Y366 and N377 each coordinate UDP-N-acetyl-alpha-D-glucosamine. Acetyl-CoA is bound by residues A380, 386-387, and A423; that span reads NY.

The protein in the N-terminal section; belongs to the N-acetylglucosamine-1-phosphate uridyltransferase family. This sequence in the C-terminal section; belongs to the transferase hexapeptide repeat family. In terms of assembly, homotrimer. The cofactor is Mg(2+).

Its subcellular location is the cytoplasm. The catalysed reaction is alpha-D-glucosamine 1-phosphate + acetyl-CoA = N-acetyl-alpha-D-glucosamine 1-phosphate + CoA + H(+). The enzyme catalyses N-acetyl-alpha-D-glucosamine 1-phosphate + UTP + H(+) = UDP-N-acetyl-alpha-D-glucosamine + diphosphate. The protein operates within nucleotide-sugar biosynthesis; UDP-N-acetyl-alpha-D-glucosamine biosynthesis; N-acetyl-alpha-D-glucosamine 1-phosphate from alpha-D-glucosamine 6-phosphate (route II): step 2/2. It participates in nucleotide-sugar biosynthesis; UDP-N-acetyl-alpha-D-glucosamine biosynthesis; UDP-N-acetyl-alpha-D-glucosamine from N-acetyl-alpha-D-glucosamine 1-phosphate: step 1/1. It functions in the pathway bacterial outer membrane biogenesis; LPS lipid A biosynthesis. Its function is as follows. Catalyzes the last two sequential reactions in the de novo biosynthetic pathway for UDP-N-acetylglucosamine (UDP-GlcNAc). The C-terminal domain catalyzes the transfer of acetyl group from acetyl coenzyme A to glucosamine-1-phosphate (GlcN-1-P) to produce N-acetylglucosamine-1-phosphate (GlcNAc-1-P), which is converted into UDP-GlcNAc by the transfer of uridine 5-monophosphate (from uridine 5-triphosphate), a reaction catalyzed by the N-terminal domain. This chain is Bifunctional protein GlmU, found in Buchnera aphidicola subsp. Schizaphis graminum (strain Sg).